A 468-amino-acid polypeptide reads, in one-letter code: Putrescine aminotransferase (468 aa).

Residues 150 to 151 (GT) and Q274 contribute to the pyridoxal 5'-phosphate site. An N6-(pyridoxal phosphate)lysine modification is found at K300. T332 provides a ligand contact to pyridoxal 5'-phosphate.

This sequence belongs to the class-III pyridoxal-phosphate-dependent aminotransferase family. Putrescine aminotransferase subfamily. Requires pyridoxal 5'-phosphate as cofactor.

It carries out the reaction an alkane-alpha,omega-diamine + 2-oxoglutarate = an omega-aminoaldehyde + L-glutamate. The enzyme catalyses putrescine + 2-oxoglutarate = 1-pyrroline + L-glutamate + H2O. It catalyses the reaction cadaverine + 2-oxoglutarate = 5-aminopentanal + L-glutamate. It functions in the pathway amine and polyamine degradation; putrescine degradation; 4-aminobutanal from putrescine (transaminase route): step 1/1. Catalyzes the aminotransferase reaction from putrescine to 2-oxoglutarate, leading to glutamate and 4-aminobutanal, which spontaneously cyclizes to form 1-pyrroline. This is the first step in one of two pathways for putrescine degradation, where putrescine is converted into 4-aminobutanoate (gamma-aminobutyrate or GABA) via 4-aminobutanal. Also functions as a cadaverine transaminase in a a L-lysine degradation pathway to succinate that proceeds via cadaverine, glutarate and L-2-hydroxyglutarate. This chain is Putrescine aminotransferase, found in Pectobacterium atrosepticum (strain SCRI 1043 / ATCC BAA-672) (Erwinia carotovora subsp. atroseptica).